Here is a 246-residue protein sequence, read N- to C-terminus: MYTRYSYNPALGRTYVYDNKFYKNLGSVIKNAKRKEHLLQHEIEERTLDPLERYVVAEDPFLGPGKNQKLTLFKEIRIVKPDTMKLVVNWSGKEFLRETWTRFMEDSFPIVNDQEIMDVFLVINMRPTRPNRCFRFLAQHALRCDPDYVPHEVIRIVEPVYVGTNNEYRISLAKKGGGCPVMNLHSEYTNSFEEFINRVIWENFYKPIVYVGTDSGEEEEILLELSLVFKIKEFAPDAPLYNGPAY.

This sequence belongs to the polyhedrin family.

Major component of the virus occlusion bodies, which are large proteinaceous structures (polyhedra), that protect the virus from the outside environment for extended periods until they are ingested by insect larvae. This chain is Polyhedrin (PH), found in Spodoptera exigua nuclear polyhedrosis virus (strain US) (SeMNPV).